Consider the following 584-residue polypeptide: 2-succinyl-5-enolpyruvyl-6-hydroxy-3-cyclohexene-1-carboxylate synthase (584 aa).

This sequence belongs to the TPP enzyme family. MenD subfamily. Homodimer. Mg(2+) is required as a cofactor. Mn(2+) serves as cofactor. It depends on thiamine diphosphate as a cofactor.

The catalysed reaction is isochorismate + 2-oxoglutarate + H(+) = 5-enolpyruvoyl-6-hydroxy-2-succinyl-cyclohex-3-ene-1-carboxylate + CO2. It participates in quinol/quinone metabolism; 1,4-dihydroxy-2-naphthoate biosynthesis; 1,4-dihydroxy-2-naphthoate from chorismate: step 2/7. It functions in the pathway quinol/quinone metabolism; menaquinone biosynthesis. Catalyzes the thiamine diphosphate-dependent decarboxylation of 2-oxoglutarate and the subsequent addition of the resulting succinic semialdehyde-thiamine pyrophosphate anion to isochorismate to yield 2-succinyl-5-enolpyruvyl-6-hydroxy-3-cyclohexene-1-carboxylate (SEPHCHC). The chain is 2-succinyl-5-enolpyruvyl-6-hydroxy-3-cyclohexene-1-carboxylate synthase from Bacillus cytotoxicus (strain DSM 22905 / CIP 110041 / 391-98 / NVH 391-98).